The primary structure comprises 213 residues: Nucleolar protein 12 (213 aa).

The stretch at 33 to 96 forms a coiled coil; sequence GFHKRKVERK…RLVTAKTESV (64 aa). Positions 109 to 213 are disordered; that stretch reads TISDLDLSGA…LTGKAQHSRE (105 aa). The segment covering 130–139 has biased composition (acidic residues); sequence AGDESEEEAS. Residues 170–182 show a composition bias toward basic residues; the sequence is AHSRKKVKRKHPR.

Belongs to the RRP17 family. In terms of assembly, interacts with KIAA1191.

The protein localises to the nucleus. It localises to the nucleolus. The protein resides in the cytoplasm. Its function is as follows. Multifunctional RNA binding protein that plays a role in RNA metabolism and DNA maintenance. Participates in the resolution of DNA stress and the maintenance of genome integrity by localizing to sites of DNA insults. Also plays a role in proper nucleolar organization by limiting nucleolar size and regulating nucleolar number. Mechanistically, regulates the nucleolar levels of fibrillarin and nucleolin, two key players in pre-rRNA processing and ribosome assembly. The chain is Nucleolar protein 12 (NOL12) from Pongo abelii (Sumatran orangutan).